Reading from the N-terminus, the 274-residue chain is 2,3,4,5-tetrahydropyridine-2,6-dicarboxylate N-succinyltransferase (274 aa).

Substrate contacts are provided by Arg-104 and Asp-141.

The protein belongs to the transferase hexapeptide repeat family. Homotrimer.

It localises to the cytoplasm. It carries out the reaction (S)-2,3,4,5-tetrahydrodipicolinate + succinyl-CoA + H2O = (S)-2-succinylamino-6-oxoheptanedioate + CoA. Its pathway is amino-acid biosynthesis; L-lysine biosynthesis via DAP pathway; LL-2,6-diaminopimelate from (S)-tetrahydrodipicolinate (succinylase route): step 1/3. The protein is 2,3,4,5-tetrahydropyridine-2,6-dicarboxylate N-succinyltransferase of Yersinia enterocolitica serotype O:8 / biotype 1B (strain NCTC 13174 / 8081).